We begin with the raw amino-acid sequence, 963 residues long: Protein bicaudal C homolog 1-A (963 aa).

The segment at 1–48 (MAAQCESIGGDMNQSDPGSNSERSADSPVPGSEDDSPHDPEWREERFR) is disordered. Residues 12 to 22 (MNQSDPGSNSE) show a composition bias toward polar residues. Positions 35-48 (DSPHDPEWREERFR) are enriched in basic and acidic residues. KH domains lie at 128–195 (RVTL…RVRI) and 280–344 (PVST…RQYL). Positions 592-601 (EASRQSNNHS) are enriched in polar residues. 3 disordered regions span residues 592 to 613 (EASRQSNNHSSAEEVNSKTDPE), 668 to 713 (ERLL…TSQS), and 767 to 834 (LRRA…NKSA). Composition is skewed to basic and acidic residues over residues 602–612 (SAEEVNSKTDP) and 683–696 (VTDKKAPGSERAAE). Low complexity predominate over residues 784 to 797 (ENSSLSRSNSREQL). A compositionally biased stretch (polar residues) spans 812 to 824 (IDSSQNDYSSSIG). Residues 862–925 (FKGSDLPELF…LLAISELNKN (64 aa)) enclose the SAM domain.

This sequence belongs to the BicC family.

Its function is as follows. Putative RNA-binding protein. May be involved in regulating gene expression during embryonic development. Seems to be involved in endoderm formation. Ectopic expression results in endoderm formation in the absence of mesoderm induction. The sequence is that of Protein bicaudal C homolog 1-A (bicc1-a) from Xenopus laevis (African clawed frog).